Here is a 156-residue protein sequence, read N- to C-terminus: Protein-export protein SecB (156 aa).

The protein belongs to the SecB family. In terms of assembly, homotetramer, a dimer of dimers. One homotetramer interacts with 1 SecA dimer.

Its subcellular location is the cytoplasm. Functionally, one of the proteins required for the normal export of preproteins out of the cell cytoplasm. It is a molecular chaperone that binds to a subset of precursor proteins, maintaining them in a translocation-competent state. It also specifically binds to its receptor SecA. This Desulfotalea psychrophila (strain LSv54 / DSM 12343) protein is Protein-export protein SecB.